The sequence spans 427 residues: UPF0597 protein CPF_0803 (427 aa).

This sequence belongs to the UPF0597 family.

The chain is UPF0597 protein CPF_0803 from Clostridium perfringens (strain ATCC 13124 / DSM 756 / JCM 1290 / NCIMB 6125 / NCTC 8237 / Type A).